We begin with the raw amino-acid sequence, 427 residues long: uncharacterized protein (427 aa).

This sequence belongs to the MG032/MG096/MG288 family.

This is an uncharacterized protein from Mycoplasma pneumoniae (strain ATCC 29342 / M129 / Subtype 1) (Mycoplasmoides pneumoniae).